A 1251-amino-acid polypeptide reads, in one-letter code: Probable transcription factor TDA9 (1251 aa).

2 consecutive C2H2-type zinc fingers follow at residues 61 to 83 and 89 to 112; these read FLCH…QRAH and FLCV…HKLH. Disordered regions lie at residues 160-227 and 398-428; these read VQLK…KSKR and NHSH…IEKS. Over residues 164–173 the composition is skewed to basic residues; it reads KAAKEKKNGK. A compositionally biased stretch (polar residues) spans 183–202; the sequence is YGANNHSTDVSPSVGNSSTP. Residues 407–428 show a composition bias toward low complexity; it reads NNSSSGINYSNNKNNNESIEKS. Phosphoserine occurs at positions 527 and 603. Positions 617–634 are enriched in low complexity; that stretch reads SLTPSLTTQTATTQSGPG. The tract at residues 617-636 is disordered; sequence SLTPSLTTQTATTQSGPGWT.

It belongs to the RSF2/TDA9 family.

It is found in the nucleus. Functionally, DNA-binding protein that acts probably as a transcription factor. This Saccharomyces cerevisiae (strain ATCC 204508 / S288c) (Baker's yeast) protein is Probable transcription factor TDA9 (TDA9).